A 76-amino-acid polypeptide reads, in one-letter code: Conotoxin Am6.3 (76 aa).

An N-terminal signal peptide occupies residues 1-22; it reads MKLTCMMIIAVLFLTAWTFATA. 3 disulfide bridges follow: cysteine 52-cysteine 67, cysteine 59-cysteine 71, and cysteine 66-cysteine 75.

This sequence belongs to the conotoxin O1 superfamily. Post-translationally, is not hydroxylated. Expressed by the venom duct.

It is found in the secreted. Probable toxin that inhibits ion channels. The sequence is that of Conotoxin Am6.3 from Conus amadis (Amadis cone).